Consider the following 361-residue polypeptide: Protein-glutamate methylesterase/protein-glutamine glutaminase 1 (361 aa).

The 118-residue stretch at 10-127 (KVLVVDDSAL…REGIEEKAQE (118 aa)) folds into the Response regulatory domain. A 4-aspartylphosphate modification is found at Asp61. A CheB-type methylesterase domain is found at 167-359 (FATTDKLIAV…ASVKRWYAEN (193 aa)). Catalysis depends on residues Ser179, His205, and Asp301.

It belongs to the CheB family. In terms of processing, phosphorylated by CheA. Phosphorylation of the N-terminal regulatory domain activates the methylesterase activity.

Its subcellular location is the cytoplasm. The enzyme catalyses [protein]-L-glutamate 5-O-methyl ester + H2O = L-glutamyl-[protein] + methanol + H(+). It carries out the reaction L-glutaminyl-[protein] + H2O = L-glutamyl-[protein] + NH4(+). Functionally, involved in chemotaxis. Part of a chemotaxis signal transduction system that modulates chemotaxis in response to various stimuli. Catalyzes the demethylation of specific methylglutamate residues introduced into the chemoreceptors (methyl-accepting chemotaxis proteins or MCP) by CheR. Also mediates the irreversible deamidation of specific glutamine residues to glutamic acid. The sequence is that of Protein-glutamate methylesterase/protein-glutamine glutaminase 1 from Hahella chejuensis (strain KCTC 2396).